Consider the following 169-residue polypeptide: S-ribosylhomocysteine lyase (169 aa).

The Fe cation site is built by H54, H58, and C128.

This sequence belongs to the LuxS family. In terms of assembly, homodimer. Fe cation serves as cofactor.

It catalyses the reaction S-(5-deoxy-D-ribos-5-yl)-L-homocysteine = (S)-4,5-dihydroxypentane-2,3-dione + L-homocysteine. Involved in the synthesis of autoinducer 2 (AI-2) which is secreted by bacteria and is used to communicate both the cell density and the metabolic potential of the environment. The regulation of gene expression in response to changes in cell density is called quorum sensing. Catalyzes the transformation of S-ribosylhomocysteine (RHC) to homocysteine (HC) and 4,5-dihydroxy-2,3-pentadione (DPD). This Shewanella loihica (strain ATCC BAA-1088 / PV-4) protein is S-ribosylhomocysteine lyase.